The primary structure comprises 256 residues: DNA repair protein RecO (256 aa).

The protein belongs to the RecO family.

Involved in DNA repair and RecF pathway recombination. The polypeptide is DNA repair protein RecO (Bartonella henselae (strain ATCC 49882 / DSM 28221 / CCUG 30454 / Houston 1) (Rochalimaea henselae)).